The primary structure comprises 1199 residues: Major DNA-binding protein (1199 aa).

A disordered region spans residues 289 to 314; the sequence is SGTTTARGARRNDVNSTSKPSPSGGF. A zinc finger lies at 497–510; the sequence is CSLCEKHTRPVCAH. Short sequence motifs (required for filament formation) lie at residues 841–842 and 1146–1148; these read FW and FNF. The required for nuclear localization stretch occupies residues 1172–1199; sequence LKRPPEDDELFDLSGIPIKHGNITMEMI.

It belongs to the herpesviridae major DNA-binding protein family. In terms of assembly, homooligomers. Forms double-helical filaments necessary for the formation of replication compartments within the host nucleus. Interacts with the origin-binding protein. Interacts with the helicase primase complex; this interaction stimulates primer synthesis activity of the helicase-primase complex. Interacts with the DNA polymerase. Interacts with the alkaline exonuclease; this interaction increases its nuclease processivity.

It is found in the host nucleus. Its function is as follows. Plays several crucial roles in viral infection. Participates in the opening of the viral DNA origin to initiate replication by interacting with the origin-binding protein. May disrupt loops, hairpins and other secondary structures present on ssDNA to reduce and eliminate pausing of viral DNA polymerase at specific sites during elongation. Promotes viral DNA recombination by performing strand-transfer, characterized by the ability to transfer a DNA strand from a linear duplex to a complementary single-stranded DNA circle. Can also catalyze the renaturation of complementary single strands. Additionally, reorganizes the host cell nucleus, leading to the formation of prereplicative sites and replication compartments. This process is driven by the protein which can form double-helical filaments in the absence of DNA. In Varicella-zoster virus (strain Oka vaccine) (HHV-3), this protein is Major DNA-binding protein.